We begin with the raw amino-acid sequence, 397 residues long: Pectate lyase (397 aa).

A signal peptide spans 1–25 (MDVYRIRISVFFLLVLLTFAALTTA). An N-linked (GlcNAc...) asparagine glycan is attached at Asn-134. Ca(2+)-binding residues include Asp-191, Asp-216, and Asp-220. Residue Asn-227 is glycosylated (N-linked (GlcNAc...) asparagine). Arg-272 is a catalytic residue.

This sequence belongs to the polysaccharide lyase 1 family. Ca(2+) is required as a cofactor.

The enzyme catalyses Eliminative cleavage of (1-&gt;4)-alpha-D-galacturonan to give oligosaccharides with 4-deoxy-alpha-D-galact-4-enuronosyl groups at their non-reducing ends.. Its pathway is glycan metabolism; pectin degradation; 2-dehydro-3-deoxy-D-gluconate from pectin: step 2/5. This chain is Pectate lyase, found in Nicotiana tabacum (Common tobacco).